Consider the following 103-residue polypeptide: METQNIRIRLKAFDHRVLDQATTDIADTARRTGALIRGPIPLPTRIEKFTVNRGPHIDKKSREQFEVRTHKRLLDIVQPTPQTVDALMKLDLAAGVNVEIKLA.

Belongs to the universal ribosomal protein uS10 family. In terms of assembly, part of the 30S ribosomal subunit.

Functionally, involved in the binding of tRNA to the ribosomes. The sequence is that of Small ribosomal subunit protein uS10 from Sphingopyxis alaskensis (strain DSM 13593 / LMG 18877 / RB2256) (Sphingomonas alaskensis).